We begin with the raw amino-acid sequence, 401 residues long: Collagen and calcium-binding EGF domain-containing protein 1 (401 aa).

The signal sequence occupies residues 1–22; the sequence is MIYPGRGASLSVAVALVLFSSG. Residues 126–167 form the EGF-like; calcium-binding domain; it reads DIDECANNNETVCSQMCVNTPGSYRCDCHSGFYLEDDGKTCT. 3 disulfides stabilise this stretch: cysteine 130/cysteine 142, cysteine 138/cysteine 151, and cysteine 153/cysteine 166. A glycan (N-linked (GlcNAc...) asparagine) is linked at asparagine 134. Disordered regions lie at residues 229-321 and 344-401; these read TTNS…PGSF and SRPL…DWPV. Collagen-like domains are found at residues 234-276 and 286-319; these read LPGP…PIGP and GRRG…GPPG. The span at 235–244 shows a compositional bias: pro residues; the sequence is PGPPGPPGPA. Low complexity predominate over residues 246-258; that stretch reads TPGAKGSSGSPGQ.

The protein belongs to the CCBE1 family. Not expressed in blood or lymphatic endothelial cells, correlating spatially and temporally with the migration routes of endothelial cells that bud from the PCV, migrate in association with somite boundaries and seed the horizontal myoseptum region from where lymphatic precursors later migrate.

The protein resides in the secreted. Required for lymphangioblast budding and angiogenic sprouting from venous endothelium during embryogenesis. Required for the formation of facial lymphatic structures. Necessary for lymphangiogenesis, but is probably not part of either the vegfc-vegfr3 signaling or sox18-prox1 transcriptional pathways. The sequence is that of Collagen and calcium-binding EGF domain-containing protein 1 (ccbe1) from Danio rerio (Zebrafish).